Reading from the N-terminus, the 107-residue chain is Heme-degrading monooxygenase (107 aa).

Residues 2-94 (IIVTNTAKIT…YILDNKITYY (93 aa)) form the ABM domain. Asparagine 6 lines the Fe cation pocket. A heme-binding site is contributed by histidine 76.

This sequence belongs to the antibiotic biosynthesis monooxygenase family. Heme-degrading monooxygenase IsdG subfamily. As to quaternary structure, homodimer.

It localises to the cytoplasm. It carries out the reaction heme b + 3 reduced [NADPH--hemoprotein reductase] + 3 O2 = biliverdin IXalpha + CO + Fe(2+) + 3 oxidized [NADPH--hemoprotein reductase] + 3 H2O + H(+). Functionally, allows bacterial pathogens to use the host heme as an iron source. Catalyzes the oxidative degradation of the heme macrocyclic porphyrin ring to the biliverdin in the presence of a suitable electron donor such as ascorbate or NADPH--cytochrome P450 reductase, with subsequent release of free iron. The sequence is that of Heme-degrading monooxygenase from Bacillus thuringiensis subsp. konkukian (strain 97-27).